Reading from the N-terminus, the 463-residue chain is Quinolone resistance protein NorB (463 aa).

Helical transmembrane passes span 19–39 (IVLS…VVLI), 53–73 (IAVS…GGLA), 86–106 (IILN…LLLI), 107–127 (IGRL…LSII), 142–162 (YWSI…GAVA), 165–185 (LGWR…LFLI), 201–221 (FDIK…ILIT), 230–250 (SLLF…FIVL), 273–293 (TASN…NTFV), 299–319 (YSLL…LIMI), 334–354 (PMLI…LTFL), 357–377 (ILYV…LGIY), 403–423 (MASA…YAIV), and 435–455 (IALW…LLLV).

Belongs to the major facilitator superfamily. TCR/Tet family.

Its subcellular location is the cell membrane. Functionally, multidrug efflux pump that acts independently of NorA and is one of the factors that confers resistance against diverse quinolones and chemical compounds. The protein is Quinolone resistance protein NorB (norB) of Staphylococcus aureus (strain bovine RF122 / ET3-1).